The sequence spans 166 residues: Ubiquitin-fold modifier-conjugating enzyme 1 (166 aa).

C116 serves as the catalytic Glycyl thioester intermediate.

The protein belongs to the ubiquitin-conjugating enzyme family. UFC1 subfamily. In terms of assembly, interacts with UBA5 (via C-terminus). Interacts with UFL1. Interacts with UFM1.

Its function is as follows. E2-like enzyme which specifically catalyzes the second step in ufmylation. Accepts the ubiquitin-like modifier UFM1 from the E1 enzyme UBA5 and forms an intermediate with UFM1 via a thioester linkage. Ufmylation is involved in various processes, such as ribosome recycling, response to DNA damage, interferon response or reticulophagy (also called ER-phagy). The protein is Ubiquitin-fold modifier-conjugating enzyme 1 (ufc1) of Danio rerio (Zebrafish).